We begin with the raw amino-acid sequence, 140 residues long: MSAHSHEIEEGLSFQPRFDASGLVTCVATDVATGDVLMVAHMNDEALRKTIATGEAWYFSRSRNALWRKGETSGQTQRVVEMRTDCDQDAVWIRVEQIGAACHTGRRSCFYRKVEAEDGGAKLVFVDADRLFDPDAVYKK.

Position 85 (Asp-85) interacts with Mg(2+). Cys-86 provides a ligand contact to Zn(2+). Asp-87 and Asp-89 together coordinate Mg(2+). Zn(2+)-binding residues include Cys-102 and Cys-109.

This sequence belongs to the PRA-CH family. As to quaternary structure, homodimer. Mg(2+) serves as cofactor. The cofactor is Zn(2+).

The protein localises to the cytoplasm. It carries out the reaction 1-(5-phospho-beta-D-ribosyl)-5'-AMP + H2O = 1-(5-phospho-beta-D-ribosyl)-5-[(5-phospho-beta-D-ribosylamino)methylideneamino]imidazole-4-carboxamide. It participates in amino-acid biosynthesis; L-histidine biosynthesis; L-histidine from 5-phospho-alpha-D-ribose 1-diphosphate: step 3/9. Functionally, catalyzes the hydrolysis of the adenine ring of phosphoribosyl-AMP. This is Phosphoribosyl-AMP cyclohydrolase from Bradyrhizobium diazoefficiens (strain JCM 10833 / BCRC 13528 / IAM 13628 / NBRC 14792 / USDA 110).